The chain runs to 87 residues: Translation initiation factor IF-1 2 (87 aa).

One can recognise an S1-like domain in the interval 1–72; it reads MAKEELLELD…TKGRINFRHK (72 aa). The segment at 68–87 is disordered; sequence NFRHKDANSPRPPRSGQPRR. Pro residues predominate over residues 77 to 87; that stretch reads PRPPRSGQPRR.

This sequence belongs to the IF-1 family. In terms of assembly, component of the 30S ribosomal translation pre-initiation complex which assembles on the 30S ribosome in the order IF-2 and IF-3, IF-1 and N-formylmethionyl-tRNA(fMet); mRNA recruitment can occur at any time during PIC assembly.

The protein localises to the cytoplasm. Functionally, one of the essential components for the initiation of protein synthesis. Stabilizes the binding of IF-2 and IF-3 on the 30S subunit to which N-formylmethionyl-tRNA(fMet) subsequently binds. Helps modulate mRNA selection, yielding the 30S pre-initiation complex (PIC). Upon addition of the 50S ribosomal subunit IF-1, IF-2 and IF-3 are released leaving the mature 70S translation initiation complex. The sequence is that of Translation initiation factor IF-1 2 from Burkholderia cenocepacia (strain HI2424).